A 255-amino-acid chain; its full sequence is Type III pantothenate kinase (255 aa).

6–13 (DVGNTNTV) serves as a coordination point for ATP. Residue 108-111 (GADR) participates in substrate binding. The active-site Proton acceptor is D110. K(+) is bound at residue D130. T133 lines the ATP pocket. T185 lines the substrate pocket.

Belongs to the type III pantothenate kinase family. Homodimer. The cofactor is NH4(+). It depends on K(+) as a cofactor.

The protein localises to the cytoplasm. It catalyses the reaction (R)-pantothenate + ATP = (R)-4'-phosphopantothenate + ADP + H(+). The protein operates within cofactor biosynthesis; coenzyme A biosynthesis; CoA from (R)-pantothenate: step 1/5. Its function is as follows. Catalyzes the phosphorylation of pantothenate (Pan), the first step in CoA biosynthesis. The protein is Type III pantothenate kinase of Hyphomonas neptunium (strain ATCC 15444).